A 520-amino-acid polypeptide reads, in one-letter code: Non-structural protein PNS7 (520 aa).

This Catharanthus roseus (Madagascar periwinkle) protein is Non-structural protein PNS7 (S6).